The following is a 156-amino-acid chain: MRRAICPGSFDPLHLGHCAVIRRATLLFDEVVVAVSTNPNKTHRFSEAQRIELVREVFADDPAVVVEPLESGLIADYAERRGAVALVKGLRNGADYDYELPMATMNRSLTGVETVFLPGEPSLLHVSSSLVMEVAALGGDVTSFVPPEVLRALEDE.

Ser-9 serves as a coordination point for substrate. ATP contacts are provided by residues 9-10 and His-17; that span reads SF. The substrate site is built by Lys-41, Ile-74, and Lys-88. ATP contacts are provided by residues 89–91, Glu-99, and 123–129; these read GLR and LLHVSSS.

It belongs to the bacterial CoaD family. Homohexamer. It depends on Mg(2+) as a cofactor.

The protein localises to the cytoplasm. The catalysed reaction is (R)-4'-phosphopantetheine + ATP + H(+) = 3'-dephospho-CoA + diphosphate. Its pathway is cofactor biosynthesis; coenzyme A biosynthesis; CoA from (R)-pantothenate: step 4/5. Functionally, reversibly transfers an adenylyl group from ATP to 4'-phosphopantetheine, yielding dephospho-CoA (dPCoA) and pyrophosphate. This is Phosphopantetheine adenylyltransferase from Kocuria rhizophila (strain ATCC 9341 / DSM 348 / NBRC 103217 / DC2201).